Reading from the N-terminus, the 927-residue chain is Heat shock protein hsp98 (927 aa).

In terms of domain architecture, Clp R spans 2 to 162 (TSKMEFTDRA…TDAIQAIRGT (161 aa)). Repeat stretches follow at residues 7-87 (FTDR…LVRL) and 99-162 (MAPS…IRGT). Residues 179–428 (LAKFTIDMTA…AVRVARESQP (250 aa)) form an NBD1 region. ATP is bound at residue 224-231 (GEPGVGKT). Residues 429–553 (EIIDSLERKL…AALNAAAAET (125 aa)) adopt a coiled-coil conformation. A disordered region spans residues 454–473 (EASKARLEQAKKDAENVEEE). An NBD2 region spans residues 562 to 752 (VGPDQINEIV…IVVMTSNLGA (191 aa)). 635–642 (GPSGTGKT) contacts ATP. The disordered stretch occupies residues 908-927 (EDAVDEVAPESEMDEDLYDD).

The protein belongs to the ClpA/ClpB family. In terms of assembly, homohexamer, forming a ring with a central pore.

It localises to the cytoplasm. It is found in the nucleus. Required, in concert with Hsp40 and Hsp70 and small Hsps, for the dissociation, resolubilization and refolding of aggregates of damaged proteins after heat or other environmental stresses. Extracts proteins from aggregates by unfolding and threading them in an ATP-dependent process through the axial channel of the protein hexamer, after which they can be refolded by components of the Hsp70/Hsp40 chaperone system. The polypeptide is Heat shock protein hsp98 (hsp98) (Neurospora crassa (strain ATCC 24698 / 74-OR23-1A / CBS 708.71 / DSM 1257 / FGSC 987)).